The sequence spans 898 residues: Phosphoenolpyruvate carboxylase (898 aa).

Active-site residues include histidine 134 and lysine 564.

The protein belongs to the PEPCase type 1 family. The cofactor is Mg(2+).

The enzyme catalyses oxaloacetate + phosphate = phosphoenolpyruvate + hydrogencarbonate. In terms of biological role, forms oxaloacetate, a four-carbon dicarboxylic acid source for the tricarboxylic acid cycle. The chain is Phosphoenolpyruvate carboxylase from Chromobacterium violaceum (strain ATCC 12472 / DSM 30191 / JCM 1249 / CCUG 213 / NBRC 12614 / NCIMB 9131 / NCTC 9757 / MK).